The chain runs to 176 residues: MQRSADVSIGPITGLNYTDLYDSLPSSVSDNITLLDLKEPERVTEATKKLILKGCVETAYHHPLETDPLFASVHKHLPDFCHSFLEHLLGGEQDENSLIDIGEFFKLLQPSLGDWITKYYLKHPNKMSGIQIKTLLNQIINMAKAESSDTETYEKVWKKMPSYFSIVLTPLLHKVV.

It belongs to the tenuiviruses NCP family.

The protein resides in the host cytoplasm. Functionally, induces the formation of large intracellular inclusion body, organized in amorphous and crystalline arrays. Presumably the main cause of the stripe disease observed in host. The protein is Major non-capsid protein of Rottboellia (Sorghum).